We begin with the raw amino-acid sequence, 230 residues long: Heptaprenylglyceryl phosphate synthase (230 aa).

Position 12 (lysine 12) interacts with sn-glycerol 1-phosphate. Mg(2+) is bound by residues aspartate 14 and serine 40. Residues 159 to 164 (YLEYSG), glycine 189, and 209 to 210 (GN) contribute to the sn-glycerol 1-phosphate site.

The protein belongs to the GGGP/HepGP synthase family. Group I subfamily. Homodimer. Mg(2+) is required as a cofactor.

It carries out the reaction sn-glycerol 1-phosphate + all-trans-heptaprenyl diphosphate = 3-heptaprenyl-sn-glycero-1-phosphate + diphosphate. It participates in membrane lipid metabolism; glycerophospholipid metabolism. Functionally, prenyltransferase that catalyzes in vivo the transfer of the heptaprenyl moiety of heptaprenyl pyrophosphate (HepPP; 35 carbon atoms) to the C3 hydroxyl of sn-glycerol-1-phosphate (G1P), producing heptaprenylglyceryl phosphate (HepGP). This reaction is an ether-bond-formation step in the biosynthesis of archaea-type G1P-based membrane lipids found in Bacillales. The polypeptide is Heptaprenylglyceryl phosphate synthase (Bacillus pumilus (strain SAFR-032)).